The primary structure comprises 1025 residues: Multidrug resistance protein MdtC (1025 aa).

12 helical membrane-spanning segments follow: residues 15 to 35 (ILISLAITLCGILGFRLLPVA), 333 to 353 (EVEQTLVISVALVILVVFLFL), 360 to 380 (LIPAVAVPVSLIGTFAAMYLC), 387 to 407 (LSLMALTIATGFVVDDAIVVL), 431 to 451 (VGFTVLSMSLSLVAVFLPLLL), 469 to 489 (VAIGISLAVSLTLTPMMCGWL), 528 to 548 (LTGLVVLGTIALSVWLYISIP), 851 to 871 (AQVILILAAIATVYIVLGVLY), 875 to 895 (VHPLTILSTLPSAGVGALLAL), 897 to 917 (IFDAPFSLIALIGIMLLIGIV), 953 to 973 (PIMMTTLAALFGALPLVLSGG), and 984 to 1004 (ITIVGGLVMSQLLTLYTTPVV).

The protein belongs to the resistance-nodulation-cell division (RND) (TC 2.A.6) family. MdtC subfamily. As to quaternary structure, part of a tripartite efflux system composed of MdtA, MdtB and MdtC. MdtC forms a heteromultimer with MdtB.

Its subcellular location is the cell inner membrane. This Klebsiella pneumoniae subsp. pneumoniae (strain ATCC 700721 / MGH 78578) protein is Multidrug resistance protein MdtC.